A 419-amino-acid polypeptide reads, in one-letter code: Aminoacyltransferase FemB (419 aa).

The protein belongs to the FemABX family. In terms of assembly, homodimer. Interacts with FemA.

It is found in the cytoplasm. The catalysed reaction is MurNAc-L-Ala-D-isoglutaminyl-L-Lys-(N(6)-tri-Gly)-D-Ala-D-Ala-diphospho-di-trans,octa-cis-undecaprenyl-GlcNAc + 2 glycyl-tRNA(Gly) = MurNAc-L-Ala-D-isoglutaminyl-L-Lys-(N(6)-penta-Gly)-D-Ala-D-Ala-diphospho-di-trans,octa-cis-undecaprenyl-GlcNAc + 2 tRNA(Gly) + 2 H(+). Functionally, catalyzes the formation of the pentaglycine interpeptide bridge, which is characteristic of the S.aureus peptidoglycan. Adds glycines 4 and 5 of the pentaglycine bridge, using glycyl-tRNA(Gly) as donor. The sequence is that of Aminoacyltransferase FemB (femB) from Staphylococcus aureus (strain bovine RF122 / ET3-1).